Here is a 98-residue protein sequence, read N- to C-terminus: Transcription elongation factor A protein-like 7 (98 aa).

A compositionally biased stretch (basic and acidic residues) spans 1-24; sequence MQRSCNEKEGKPKCSEPKREEEHP. The segment at 1-31 is disordered; that stretch reads MQRSCNEKEGKPKCSEPKREEEHPYGAFEGQ. Positions 59-89 form a coiled coil; the sequence is GEEMTGEEEEMERCLEEIRSLRKKFRALHSN.

It belongs to the TFS-II family. TFA subfamily.

The protein localises to the nucleus. Functionally, plays a role in the negative regulation of NF-kappa-B signaling at the basal level by modulating transcriptional activity of NF-kappa-B on its target gene promoters. Associates with cyclin D1 promoter containing Myc E-box sequence and transcriptionally represses cyclin D1 expression. Regulates telomerase reverse transcriptase expression and telomerase activity in both ALT (alternative lengthening of telomeres)and telomerase-positive cell lines. This Rattus norvegicus (Rat) protein is Transcription elongation factor A protein-like 7 (Tceal7).